The sequence spans 398 residues: MEEDDLNPAGKPLYRLYFKGLVTEEKEMLLAGFGVAICGDKDDLLFDLKVSIHDPTITLLEVELIALKSGLNQAVSLGINHISICCDHEYIFELVMGISTPKQESIALLLRDVQGIRKYLTSSIPVMLTQNQSNLAYDFAIEAISSEIIIDIPAQKETCNICLNDDINADQMFSVDKSGHMCCSECVKRHIEVRLLEGSLITCPHYRCNSLLTSVRCGNLLTPKLNKMWEQKTKDELIPVMDRVYCPNPRCSTLMSETELSGLNIGVRRCCVKCGEPFCVKCKVSWHNNLSCDEYKTLHPNPTENDGRLRDLANEKSWRQCSKCKHMIELSSGCISVVCRCGHTFCYQCGADAGDCFHGLGRDDLDLTQCCGSCCCFVFFLVIIAIVVTIILLVRRFS.

The tract at residues 155–374 is TRIAD supradomain; sequence QKETCNICLN…LDLTQCCGSC (220 aa). Residues Cys-159, Cys-162, Cys-183, Cys-186, Cys-246, Cys-251, Cys-271, Cys-274, Cys-279, Cys-282, His-287, Cys-292, Cys-321, and Cys-324 each coordinate Zn(2+). Residues 159-207 form an RING-type 3; degenerate zinc finger; sequence CNICLNDDINADQMFSVDKSGHMCCSECVKRHIEVRLLEGSLITCPHYR. The segment at 159 to 208 adopts an RING-type 1 zinc-finger fold; sequence CNICLNDDINADQMFSVDKSGHMCCSECVKRHIEVRLLEGSLITCPHYRC. The IBR-type zinc-finger motif lies at 233 to 292; that stretch reads TKDELIPVMDRVYCPNPRCSTLMSETELSGLNIGVRRCCVKCGEPFCVKCKVSWHNNLSC. The RING-type 2; atypical zinc finger occupies 321–349; that stretch reads CSKCKHMIELSSGCISVVCRCGHTFCYQC. The segment at 321 to 356 adopts an RING-type 4; degenerate zinc-finger fold; the sequence is CSKCKHMIELSSGCISVVCRCGHTFCYQCGADAGDC. Residue Cys-334 is part of the active site. Zn(2+) is bound by residues Cys-339, Cys-341, Cys-346, Cys-349, His-358, and Cys-370. Residues 374–394 traverse the membrane as a helical segment; it reads CCCFVFFLVIIAIVVTIILLV.

Belongs to the RBR family. As to quaternary structure, interacts with the PYL4 and PYR1 ABA receptors at the plasma membrane. Requires Zn(2+) as cofactor.

The protein localises to the cell membrane. It is found in the vacuole membrane. The catalysed reaction is [E2 ubiquitin-conjugating enzyme]-S-ubiquitinyl-L-cysteine + [acceptor protein]-L-lysine = [E2 ubiquitin-conjugating enzyme]-L-cysteine + [acceptor protein]-N(6)-ubiquitinyl-L-lysine.. It participates in protein modification; protein ubiquitination. In terms of biological role, acts as an E3 ubiquitin-protein ligase, or as part of E3 complex, which accepts ubiquitin from specific E2 ubiquitin-conjugating enzymes and then transfers it to substrates. Negative regulator of the abscisic acid (ABA) signaling pathway which targets PYL4 and PYR1 ABA receptors in plasma membrane to promote their FREE1/FYVE1-dependent trafficking and degradation upon ubiquitynation; this process involves clathrin-mediated endocytosis and trafficking through the ESCRT pathway. Involved in the maintenance of seed longevity. May enhance gibberellins responses. The polypeptide is E3 ubiquitin-protein ligase RSL1 (Arabidopsis thaliana (Mouse-ear cress)).